The following is a 394-amino-acid chain: Ribose-phosphate pyrophosphokinase 5, chloroplastic (394 aa).

Residues 1-33 (MASIVQPSPTFPALNLRRSSLIRPPSSVRFPLK) constitute a chloroplast transit peptide. Mg(2+) is bound by residues D202, H204, D213, and D217. The interval 288–303 (GKVAIMVDDMIDTAGT) is binding of phosphoribosylpyrophosphate.

The protein belongs to the ribose-phosphate pyrophosphokinase family.

Its subcellular location is the plastid. It is found in the chloroplast. It catalyses the reaction D-ribose 5-phosphate + ATP = 5-phospho-alpha-D-ribose 1-diphosphate + AMP + H(+). The polypeptide is Ribose-phosphate pyrophosphokinase 5, chloroplastic (PRS5) (Arabidopsis thaliana (Mouse-ear cress)).